A 284-amino-acid polypeptide reads, in one-letter code: Deoxyribonuclease-1 (284 aa).

Positions 1–22 are cleaved as a signal peptide; sequence MRYTGLMGTLLTLVNLLQLAGT. An N-linked (GlcNAc...) asparagine glycan is attached at Asn40. Glu100 is a catalytic residue. Cys123 and Cys126 are oxidised to a cystine. Asn128 is a glycosylation site (N-linked (GlcNAc...) asparagine). His156 is a catalytic residue. Cys195 and Cys231 form a disulfide bridge.

It belongs to the DNase I family. It depends on Ca(2+) as a cofactor. The cofactor is Mg(2+). N-glycosylated. In terms of tissue distribution, highly expressed in the parotid and submandibular gland as well as in the kidney and duodenum (at protein level). Expressed at intermediate level in the ileum, mesenterial lymph nodes, liver, ventral prostate, epididymis, ovary and stomach (at protein level). Expressed at low level in the sublingual, preputial, coagulation and pituitary gland (at protein level). Also present in the lachrymal and thyroid glands, striated muscle, intestine, the urinary bladder and the eye.

The protein localises to the secreted. The protein resides in the zymogen granule. Its subcellular location is the nucleus envelope. It carries out the reaction Endonucleolytic cleavage to 5'-phosphodinucleotide and 5'-phosphooligonucleotide end-products.. Its function is as follows. Serum endocuclease secreted into body fluids by a wide variety of exocrine and endocrine organs. Expressed by non-hematopoietic tissues and preferentially cleaves protein-free DNA. Among other functions, seems to be involved in cell death by apoptosis. Binds specifically to G-actin and blocks actin polymerization. Together with DNASE1L3, plays a key role in degrading neutrophil extracellular traps (NETs). NETs are mainly composed of DNA fibers and are released by neutrophils to bind pathogens during inflammation. Degradation of intravascular NETs by DNASE1 and DNASE1L3 is required to prevent formation of clots that obstruct blood vessels and cause organ damage following inflammation. The sequence is that of Deoxyribonuclease-1 from Mus musculus (Mouse).